The sequence spans 488 residues: MGKFLATLILFFQFCPLILGDYSPSCCTLTVGVSSYHSKPCNPAQPVCSWTLDLLALSADQALQPPCPNLVSYSSYHATYSLYLFPHWIKKPNRNGGGYYSASYSDPCSLKCPYLGCQSWTCPYTGAVSSPYWKFQQDVNFTQEVSHLNINLHFSKCGFSFSLLVDAPGYDPIWFLNTEPSQLPPTAPPLLSHSNLDHILEPSIPWKSKLLTLVQLTLQSTNYTCIVCIDRASLSTWHVLYSPNVSVPSPSSTPLLYPSLALPAPHLTLPFNWTHCFDPQIQAIVSSPCHNSLILPPFSLSPVPTLGSRSRRAVPVAVWLVSALAMGAGVAGRITGSMSLASGKSLLHEVDKDISQLTQAIVKNHKNLLKIAQYAAQNRRGLDLLFWEQGGLCKALQEQCCFLNITNSHVSILQERPPLENRVLTGWGLNWDLGLSQWAREALQTGITLVALLLLVILAGPCILRQLRHLPSRVRYPHYSLINPESSL.

An N-terminal signal peptide occupies residues 1 to 20 (MGKFLATLILFFQFCPLILG). Residues 21–442 (DYSPSCCTLT…LGLSQWAREA (422 aa)) lie on the Extracellular side of the membrane. N-linked (GlcNAc...) asparagine; by host glycosylation is found at Asn140 and Asn222. The CXXC signature appears at 225-228 (CIVC). 3 disulfide bridges follow: Cys225/Cys228, Cys225/Cys401, and Cys393/Cys400. N-linked (GlcNAc...) asparagine; by host glycosylation is found at Asn244 and Asn272. The tract at residues 313–333 (AVPVAVWLVSALAMGAGVAGR) is fusion peptide. Coiled coils occupy residues 341 to 387 (ASGK…LLFW) and 397 to 429 (QEQCCFLNITNSHVSILQERPPLENRVLTGWGL). Residues 376–392 (AQNRRGLDLLFWEQGGL) form an immunosuppression region. A CX6CC motif is present at residues 393–401 (CKALQEQCC). N-linked (GlcNAc...) asparagine; by host glycosylation is present at Asn404. Residues 443–463 (LQTGITLVALLLLVILAGPCI) traverse the membrane as a helical segment. A lipid anchor (S-palmitoyl cysteine; by host) is attached at Cys462. At 464-488 (LRQLRHLPSRVRYPHYSLINPESSL) the chain is on the cytoplasmic side.

As to quaternary structure, the mature envelope protein (Env) consists of a trimer of SU-TM heterodimers attached by a labile interchain disulfide bond. In terms of processing, specific enzymatic cleavages in vivo yield mature proteins. Envelope glycoproteins are synthesized as an inactive precursor that is N-glycosylated and processed likely by host cell furin or by a furin-like protease in the Golgi to yield the mature SU and TM proteins. The cleavage site between SU and TM requires the minimal sequence [KR]-X-[KR]-R. The CXXC motif is highly conserved across a broad range of retroviral envelope proteins. It is thought to participate in the formation of a labile disulfide bond possibly with the CX6CC motif present in the transmembrane protein. Isomerization of the intersubunit disulfide bond to an SU intrachain disulfide bond is thought to occur upon receptor recognition in order to allow membrane fusion. Post-translationally, the transmembrane protein is palmitoylated.

It is found in the virion membrane. It localises to the host cell membrane. Functionally, the surface protein (SU) attaches the virus to the host cell by binding to its receptor. This interaction triggers the refolding of the transmembrane protein (TM) and is thought to activate its fusogenic potential by unmasking its fusion peptide. Fusion occurs at the host cell plasma membrane. In terms of biological role, the transmembrane protein (TM) acts as a class I viral fusion protein. Under the current model, the protein has at least 3 conformational states: pre-fusion native state, pre-hairpin intermediate state, and post-fusion hairpin state. During viral and target cell membrane fusion, the coiled coil regions (heptad repeats) assume a trimer-of-hairpins structure, positioning the fusion peptide in close proximity to the C-terminal region of the ectodomain. The formation of this structure appears to drive apposition and subsequent fusion of viral and target cell membranes. Membranes fusion leads to delivery of the nucleocapsid into the cytoplasm. The polypeptide is Envelope glycoprotein gp62 (env) (Homo sapiens (Human)).